The primary structure comprises 535 residues: Dual specificity calcium/calmodulin-dependent 3',5'-cyclic nucleotide phosphodiesterase 1B (535 aa).

Positions 1–21 are disordered; the sequence is MELSPRSPPEMLESDCPSPLE. Residues Ser7 and Ser14 each carry the phosphoserine modification. Calmodulin-binding regions lie at residues 27–47 and 117–140; these read SKKM…QLEN and EKPK…MFRR. A PDEase domain is found at 145-502; the sequence is VGPTYSTAVH…QKWKERAASG (358 aa). His222 functions as the Proton donor in the catalytic mechanism. Zn(2+)-binding residues include His226, His262, Asp263, and Asp369. Asp263 provides a ligand contact to Mg(2+). 2 disordered regions span residues 445–474 and 495–535; these read PLTD…GDPN and WKER…GNLD. The segment covering 454 to 463 has biased composition (polar residues); it reads KSQPSFQWRQ. A phosphoserine mark is found at Ser465 and Ser513.

Belongs to the cyclic nucleotide phosphodiesterase family. PDE1 subfamily. In terms of assembly, homodimer. It depends on Zn(2+) as a cofactor. The cofactor is Mg(2+). In terms of tissue distribution, expressed in brain.

The protein localises to the cytoplasm. It localises to the cytosol. The enzyme catalyses a nucleoside 3',5'-cyclic phosphate + H2O = a nucleoside 5'-phosphate + H(+). It carries out the reaction 3',5'-cyclic GMP + H2O = GMP + H(+). It catalyses the reaction 3',5'-cyclic AMP + H2O = AMP + H(+). Type I PDE are activated by the binding of calmodulin in the presence of Ca(2+). Functionally, cyclic nucleotide phosphodiesterase with a dual specificity for the second messengers cAMP and cGMP, which are key regulators of many important physiological processes. Has a preference for cGMP as a substrate. In Rattus norvegicus (Rat), this protein is Dual specificity calcium/calmodulin-dependent 3',5'-cyclic nucleotide phosphodiesterase 1B.